Here is a 305-residue protein sequence, read N- to C-terminus: tRNA pseudouridine synthase B (305 aa).

Asp-39 (nucleophile) is an active-site residue.

This sequence belongs to the pseudouridine synthase TruB family. Type 1 subfamily.

The enzyme catalyses uridine(55) in tRNA = pseudouridine(55) in tRNA. Its function is as follows. Responsible for synthesis of pseudouridine from uracil-55 in the psi GC loop of transfer RNAs. This Staphylococcus aureus (strain MW2) protein is tRNA pseudouridine synthase B.